Here is a 323-residue protein sequence, read N- to C-terminus: NADH-ubiquinone oxidoreductase chain 1 (323 aa).

Transmembrane regions (helical) follow at residues 10–30 (LLYI…GLLI), 52–72 (PNVV…KLVL), 84–104 (IIYA…WSVI), 119–139 (VIFI…AGWA), 157–177 (VSYE…AGTV), 189–209 (VWFI…ALAE), 245–265 (YANI…GIVS), 268–288 (ISGA…RATL), and 302–322 (KSLL…VLII).

The protein belongs to the complex I subunit 1 family.

The protein resides in the mitochondrion inner membrane. The enzyme catalyses a ubiquinone + NADH + 5 H(+)(in) = a ubiquinol + NAD(+) + 4 H(+)(out). In terms of biological role, core subunit of the mitochondrial membrane respiratory chain NADH dehydrogenase (Complex I) that is believed to belong to the minimal assembly required for catalysis. Complex I functions in the transfer of electrons from NADH to the respiratory chain. The immediate electron acceptor for the enzyme is believed to be ubiquinone. The polypeptide is NADH-ubiquinone oxidoreductase chain 1 (nad1) (Dictyostelium citrinum (Slime mold)).